Consider the following 452-residue polypeptide: Keratin, type I cytoskeletal 42 (452 aa).

Positions 4 to 93 are head; it reads TTSIRQFSTS…GVSDALLGGS (90 aa). Coiled-coil stretches lie at residues 93–132 and 188–407; these read SEKE…WYKK and NLRM…HLAT. The coil 1A stretch occupies residues 94–129; that stretch reads EKETMQNLNDRLATYLDRVRALEEANTDLEVKIREW. One can recognise an IF rod domain in the interval 94-405; that stretch reads EKETMQNLND…RLLEGEDAHL (312 aa). Positions 130-147 are linker 1; the sequence is YKKQGPGPARDYSPYFKT. The interval 148 to 239 is coil 1B; that stretch reads IEDLRNKILA…KNHEEEMNAL (92 aa). A linker 12 region spans residues 240–262; sequence RGQVGGDVNVEMDAAPGVDLSRI. The segment at 263–401 is coil 2; it reads LNEMRDQYEK…ATYRRLLEGE (139 aa). A tail region spans residues 402–452; it reads DAHLATQYSSSLASQASREGTVTSRQVRTIVEEVQDGKVVSSREQVHRSTH.

It belongs to the intermediate filament family. In terms of assembly, heterodimer of a type I and a type II keratin. Colocalizes with KRT8/KRT18 filament network.

The protein localises to the cytoplasm. The chain is Keratin, type I cytoskeletal 42 from Rattus norvegicus (Rat).